A 227-amino-acid polypeptide reads, in one-letter code: Small ribosomal subunit protein uS3 (227 aa).

The 69-residue stretch at 38-106 (LRKYLREKLA…EVHLNIVEIR (69 aa)) folds into the KH type-2 domain.

The protein belongs to the universal ribosomal protein uS3 family. As to quaternary structure, part of the 30S ribosomal subunit. Forms a tight complex with proteins S10 and S14.

Functionally, binds the lower part of the 30S subunit head. Binds mRNA in the 70S ribosome, positioning it for translation. This Paramagnetospirillum magneticum (strain ATCC 700264 / AMB-1) (Magnetospirillum magneticum) protein is Small ribosomal subunit protein uS3.